We begin with the raw amino-acid sequence, 1025 residues long: Multidrug resistance protein MdtC (1025 aa).

The next 12 helical transmembrane spans lie at 3–23 (FFAL…AITL), 333–353 (EVEQ…FLFL), 360–380 (IIPA…MYLC), 387–407 (LSLM…IVVL), 431–451 (VGFT…PLLL), 463–483 (FAVT…TLTP), 528–548 (LVGV…ISIP), 853–873 (VILI…LYES), 875–895 (VHPL…LLAL), 897–917 (LFNA…IGIV), 953–973 (PIMM…LSGG), and 984–1004 (ITIV…TPVV).

This sequence belongs to the resistance-nodulation-cell division (RND) (TC 2.A.6) family. MdtC subfamily. Part of a tripartite efflux system composed of MdtA, MdtB and MdtC. MdtC forms a heteromultimer with MdtB.

The protein resides in the cell inner membrane. Its function is as follows. The MdtABC tripartite complex confers resistance against novobiocin and deoxycholate. The sequence is that of Multidrug resistance protein MdtC from Escherichia coli (strain UTI89 / UPEC).